The primary structure comprises 247 residues: tRNA pseudouridine synthase A (247 aa).

Asp53 serves as the catalytic Nucleophile. Residue Tyr111 participates in substrate binding.

It belongs to the tRNA pseudouridine synthase TruA family. As to quaternary structure, homodimer.

The catalysed reaction is uridine(38/39/40) in tRNA = pseudouridine(38/39/40) in tRNA. Formation of pseudouridine at positions 38, 39 and 40 in the anticodon stem and loop of transfer RNAs. This is tRNA pseudouridine synthase A from Bacillus subtilis (strain 168).